A 407-amino-acid polypeptide reads, in one-letter code: Imidazolonepropionase (407 aa).

2 residues coordinate Fe(3+): His68 and His70. His68 and His70 together coordinate Zn(2+). Residues Arg77, Tyr140, and His173 each contribute to the 4-imidazolone-5-propanoate site. Residue Tyr140 coordinates N-formimidoyl-L-glutamate. His238 provides a ligand contact to Fe(3+). His238 provides a ligand contact to Zn(2+). Gln241 contacts 4-imidazolone-5-propanoate. Asp313 contacts Fe(3+). Residue Asp313 participates in Zn(2+) binding. Positions 315 and 317 each coordinate N-formimidoyl-L-glutamate. Residue Thr318 coordinates 4-imidazolone-5-propanoate.

It belongs to the metallo-dependent hydrolases superfamily. HutI family. Zn(2+) is required as a cofactor. It depends on Fe(3+) as a cofactor.

Its subcellular location is the cytoplasm. It catalyses the reaction 4-imidazolone-5-propanoate + H2O = N-formimidoyl-L-glutamate. It functions in the pathway amino-acid degradation; L-histidine degradation into L-glutamate; N-formimidoyl-L-glutamate from L-histidine: step 3/3. Catalyzes the hydrolytic cleavage of the carbon-nitrogen bond in imidazolone-5-propanoate to yield N-formimidoyl-L-glutamate. It is the third step in the universal histidine degradation pathway. The polypeptide is Imidazolonepropionase (Burkholderia orbicola (strain MC0-3)).